The following is an 877-amino-acid chain: Neurotrypsin (877 aa).

The signal sequence occupies residues 1–20 (MTLARFVLALVLGALPEVVS). N26 carries an N-linked (GlcNAc...) asparagine glycan. Residues 31–90 (HRHRHRHSPPPGLQYPYYLPTQQRPPRTRPPPPLPRFPRPPRALPAQRPHALQAGHTPRP) form a disordered region. The segment covering 44–55 (QYPYYLPTQQRP) has biased composition (low complexity). The span at 58-73 (TRPPPPLPRFPRPPRA) shows a compositional bias: pro residues. Positions 95 to 167 (CPAGEPWVSV…GKVDWGYCDC (73 aa)) constitute a Kringle domain. 20 cysteine pairs are disulfide-bonded: C95-C167, C111-C151, C140-C165, C197-C261, C210-C271, C241-C251, C307-C371, C320-C381, C351-C361, C414-C477, C427-C487, C457-C467, C527-C591, C540-C601, C571-C581, C621-C752, C663-C679, C767-C833, C796-C810, and C823-C852. 4 SRCR domains span residues 172-273 (VRLR…TCSF), 282-383 (IRLV…SCTP), 389-489 (IRLA…ACYP), and 502-603 (VRLM…ICDY). The interval 621–632 (CGLRLLHRRQKR) is zymogen activation region. The Peptidase S1 domain occupies 633 to 876 (IIGGKNSLRG…FVPWIKSVTK (244 aa)). Residue H678 is the Charge relay system of the active site. N-linked (GlcNAc...) asparagine glycosylation is present at N685. D728 (charge relay system) is an active-site residue. Residue S827 is the Charge relay system of the active site.

It belongs to the peptidase S1 family.

It localises to the secreted. Its function is as follows. Plays a role in neuronal plasticity and the proteolytic action may subserve structural reorganizations associated with learning and memory operations. This is Neurotrypsin (PRSS12) from Pongo pygmaeus (Bornean orangutan).